The chain runs to 367 residues: Anthranilate phosphoribosyltransferase (367 aa).

Residues 1 to 17 (MVLSSEASSAADHSAAA) show a composition bias toward low complexity. Positions 1-22 (MVLSSEASSAADHSAAAPIPTS) are disordered. 5-phospho-alpha-D-ribose 1-diphosphate is bound by residues G104, 107-108 (GD), T112, 114-117 (NLST), 132-140 (KHGNRAASS), and G144. G104 serves as a coordination point for anthranilate. S116 serves as a coordination point for Mg(2+). Residue N135 participates in anthranilate binding. R190 contacts anthranilate. Residues D248 and E249 each coordinate Mg(2+).

It belongs to the anthranilate phosphoribosyltransferase family. In terms of assembly, homodimer. Mg(2+) is required as a cofactor.

It catalyses the reaction N-(5-phospho-beta-D-ribosyl)anthranilate + diphosphate = 5-phospho-alpha-D-ribose 1-diphosphate + anthranilate. It participates in amino-acid biosynthesis; L-tryptophan biosynthesis; L-tryptophan from chorismate: step 2/5. In terms of biological role, catalyzes the transfer of the phosphoribosyl group of 5-phosphorylribose-1-pyrophosphate (PRPP) to anthranilate to yield N-(5'-phosphoribosyl)-anthranilate (PRA). The chain is Anthranilate phosphoribosyltransferase from Mycobacterium ulcerans (strain Agy99).